We begin with the raw amino-acid sequence, 143 residues long: Large ribosomal subunit protein uL11 (143 aa).

This sequence belongs to the universal ribosomal protein uL11 family. In terms of assembly, part of the ribosomal stalk of the 50S ribosomal subunit. Interacts with L10 and the large rRNA to form the base of the stalk. L10 forms an elongated spine to which L12 dimers bind in a sequential fashion forming a multimeric L10(L12)X complex. One or more lysine residues are methylated.

In terms of biological role, forms part of the ribosomal stalk which helps the ribosome interact with GTP-bound translation factors. The sequence is that of Large ribosomal subunit protein uL11 from Borreliella burgdorferi (strain ATCC 35210 / DSM 4680 / CIP 102532 / B31) (Borrelia burgdorferi).